Reading from the N-terminus, the 160-residue chain is Endoribonuclease YbeY (160 aa).

Zn(2+) is bound by residues histidine 127, histidine 131, and histidine 137.

It belongs to the endoribonuclease YbeY family. Zn(2+) serves as cofactor.

The protein localises to the cytoplasm. Functionally, single strand-specific metallo-endoribonuclease involved in late-stage 70S ribosome quality control and in maturation of the 3' terminus of the 16S rRNA. This is Endoribonuclease YbeY from Synechococcus sp. (strain RCC307).